The primary structure comprises 126 residues: MFLKATLLLGLAVLGMHVWAIQMEFVDISKDLDYFVVSVEFAVAWFNSDNTEEQAYKLLEVRRAQQKSWTMIYLMELDLGRTICKKHDEDIDNCPLQESPGERKVNCTFIVDSRPWFTQFTLLNST.

An N-terminal signal peptide occupies residues 1 to 20 (MFLKATLLLGLAVLGMHVWA). An intrachain disulfide couples cysteine 84 to cysteine 94. A glycan (N-linked (GlcNAc...) asparagine) is linked at asparagine 106.

Belongs to the cystatin family.

It localises to the secreted. This chain is Probable cystatin-16, found in Bos taurus (Bovine).